A 21-amino-acid polypeptide reads, in one-letter code: Peptide PGLa-B2 (21 aa).

A Leucine amide modification is found at leucine 21.

In terms of tissue distribution, expressed by the skin glands.

Its subcellular location is the secreted. In terms of biological role, has antimicrobial activity against Gram-negative bacterium E.coli ATCC 25922 (MIC=25 uM), Gram-positive bacterium S.auerus ATCC 25923 (MIC=50 uM) and against fungus C.albicans ATCC 90028 (MIC=25 uM). Has some hemolytic activity against human erythrocytes at high concentration. The chain is Peptide PGLa-B2 from Xenopus borealis (Kenyan clawed frog).